The following is a 329-amino-acid chain: MAEVPIAVPVSIRDEVVPSRKRVKLPPWLEIAKPRLIPLLLATTLGGMALSESWPLPLPRLACTLGGGALAAAAAGVLNCLWEEQLDGQMQRTSGRALPSGRLSGSQAFLIAVALACGASLLLVAGVNCLAAGLSLLGLCSYVLLYTIVLKPRTTRNIVIGGVAGAIPPLVGAAAATGHVGLGGWWLFGLVMLWTPAHFWALALLLTDDYRSVGIPMLPVVKGPEVTGRAINRYAYATVAASLLGVLTLPSGGLFYGLMVLPFNGRLLQMAQRLGELPDDKQRAKGLFRWSILYLFGICLLLLLARTTMAADFSNQLISLLTLPPASAF.

Helical transmembrane passes span 61–81, 108–128, 130–150, 158–178, 186–206, 243–263, and 284–304; these read LACT…LNCL, AFLI…AGVN, LAAG…TIVL, IVIG…AATG, WLFG…ALLL, LLGV…VLPF, and AKGL…LLLL.

This sequence belongs to the UbiA prenyltransferase family. Protoheme IX farnesyltransferase subfamily.

The protein resides in the cell inner membrane. It catalyses the reaction heme b + (2E,6E)-farnesyl diphosphate + H2O = Fe(II)-heme o + diphosphate. The protein operates within porphyrin-containing compound metabolism; heme O biosynthesis; heme O from protoheme: step 1/1. Converts heme B (protoheme IX) to heme O by substitution of the vinyl group on carbon 2 of heme B porphyrin ring with a hydroxyethyl farnesyl side group. The sequence is that of Protoheme IX farnesyltransferase from Synechococcus sp. (strain RCC307).